The following is a 459-amino-acid chain: E3 ubiquitin-protein ligase RNF25 (459 aa).

Residues 18–128 (SEVEVLESIY…EKGKEILTDN (111 aa)) enclose the RWD domain. Cysteine 135, cysteine 138, cysteine 153, histidine 155, histidine 158, cysteine 161, cysteine 198, and cysteine 201 together coordinate Zn(2+). The segment at 135–202 (CVICLYGFQE…AVGVQCPVCR (68 aa)) adopts an RING-type zinc-finger fold. Disordered regions lie at residues 268 to 309 (PPAP…PPLP) and 322 to 459 (TRSN…KDGS). Positions 282–303 (KGSQPPSTLAAELSTSPAVQST) are enriched in polar residues. Basic and acidic residues-rich tracts occupy residues 349 to 370 (QPERRHPKGGECHAPKGTRDTQ), 378 to 389 (PLKEPMDLKPEP), 413 to 424 (RTRDCVRWERSK), and 446 to 459 (TRRESLGLESKDGS). At serine 450 the chain carries Phosphoserine.

This sequence belongs to the RNF25 family. Interacts with UBE2D2, and may also interact with UBE2E1 and UBE2E3. Interacts with RELA/p65. In terms of processing, ubiquitinated; autoubiquitinated.

Its subcellular location is the cytoplasm. It catalyses the reaction S-ubiquitinyl-[E2 ubiquitin-conjugating enzyme]-L-cysteine + [acceptor protein]-L-lysine = [E2 ubiquitin-conjugating enzyme]-L-cysteine + N(6)-ubiquitinyl-[acceptor protein]-L-lysine.. It participates in protein modification; protein ubiquitination. Its function is as follows. E3 ubiquitin-protein ligase that plays a key role in the RNF14-RNF25 translation quality control pathway, a pathway that takes place when a ribosome has stalled during translation, and which promotes ubiquitination and degradation of translation factors on stalled ribosomes. Catalyzes ubiquitination of RPS27A in response to ribosome collisions, promoting activation of RNF14. RNF25 catalyzes ubiquitination of other ribosomal proteins on stalled ribosomes, such as RPL0, RPL1, RPL12, RPS13 and RPS17. Also involved in ubiquitination and degradation of stalled ETF1/eRF1. Independently of its function in the response to stalled ribosomes, mediates ubiquitination and subsequent proteasomal degradation of NKD2. May also stimulate transcription mediated by NF-kappa-B via its interaction with RELA/p65. The polypeptide is E3 ubiquitin-protein ligase RNF25 (Homo sapiens (Human)).